Consider the following 174-residue polypeptide: Endoribonuclease YbeY (174 aa).

The Zn(2+) site is built by His129, His133, and His139.

Belongs to the endoribonuclease YbeY family. Zn(2+) serves as cofactor.

The protein resides in the cytoplasm. Single strand-specific metallo-endoribonuclease involved in late-stage 70S ribosome quality control and in maturation of the 3' terminus of the 16S rRNA. This is Endoribonuclease YbeY from Lactobacillus acidophilus (strain ATCC 700396 / NCK56 / N2 / NCFM).